We begin with the raw amino-acid sequence, 606 residues long: Zinc metalloproteinase-disintegrin-like HF3 (606 aa).

A signal peptide spans 1–20; it reads MIQVLLVTICLAAFPYQGSS. Positions 21-190 are excised as a propeptide; sequence IILESGNVND…KKASQLVVTA (170 aa). In terms of domain architecture, Peptidase M12B spans 199–395; that stretch reads KYIELVILAD…YKPQCILNEP (197 aa). E202 is a binding site for Ca(2+). The N-linked (GlcNAc...) asparagine glycan is linked to N259. D286 is a binding site for Ca(2+). 3 cysteine pairs are disulfide-bonded: C310–C390, C350–C374, and C352–C357. N-linked (GlcNAc...) asparagine glycosylation occurs at N313. H335 serves as a coordination point for Zn(2+). The active site involves E336. Zn(2+)-binding residues include H339 and H345. N373 carries N-linked (GlcNAc...) asparagine glycosylation. Residues C390, N393, V405, N408, L410, E412, E415, and D418 each coordinate Ca(2+). The Disintegrin domain maps to 403 to 489; it reads PPVCGNELLE…DCPTDDFKRN (87 aa). 14 disulfide bridges follow: C406–C435, C417–C430, C419–C425, C429–C452, C443–C449, C448–C474, C461–C481, C468–C500, C493–C505, C512–C562, C527–C569, C540–C550, C557–C594, and C588–C599. A D/ECD-tripeptide motif is present at residues 467–469; sequence ECD. Ca(2+) is bound by residues D469, E472, and D484. N519 is a glycosylation site (N-linked (GlcNAc...) asparagine). N-linked (GlcNAc...) asparagine glycosylation is present at N584.

The protein belongs to the venom metalloproteinase (M12B) family. P-III subfamily. P-IIIa sub-subfamily. As to quaternary structure, monomer. Zn(2+) is required as a cofactor. Expressed by the venom gland.

It is found in the secreted. Functionally, the metalloproteinase-disintegrin-like HF3 is a potent hemorrhagic toxin that activates macrophages for phagocytosis through integrin alpha-M/beta-2 (ITGAM/ITGB2). It inhibits collagen-induced platelet aggregation. This protein shows cleavage specificity for substrate for leucine at P1' position, followed by hydrophobic residues in P2'. The polypeptide is Zinc metalloproteinase-disintegrin-like HF3 (Bothrops jararaca (Jararaca)).